We begin with the raw amino-acid sequence, 431 residues long: Na(+)-translocating NADH-quinone reductase subunit F (431 aa).

The chain crosses the membrane as a helical span at residues 10-30 (ISIASLVFCVIGLILSGIILI). Residues 41 to 133 (CKLKINDDDS…DMCLEIEERY (93 aa)) form the 2Fe-2S ferredoxin-type domain. [2Fe-2S] cluster contacts are provided by cysteine 76, cysteine 82, cysteine 85, and cysteine 117. The 151-residue stretch at 136-286 (ASSWEGTVVS…SGPYGESFMK (151 aa)) folds into the FAD-binding FR-type domain.

It belongs to the NqrF family. In terms of assembly, composed of six subunits; NqrA, NqrB, NqrC, NqrD, NqrE and NqrF. Requires [2Fe-2S] cluster as cofactor. It depends on FAD as a cofactor.

It localises to the cell inner membrane. The catalysed reaction is a ubiquinone + n Na(+)(in) + NADH + H(+) = a ubiquinol + n Na(+)(out) + NAD(+). Functionally, NQR complex catalyzes the reduction of ubiquinone-1 to ubiquinol by two successive reactions, coupled with the transport of Na(+) ions from the cytoplasm to the periplasm. The first step is catalyzed by NqrF, which accepts electrons from NADH and reduces ubiquinone-1 to ubisemiquinone by a one-electron transfer pathway. The polypeptide is Na(+)-translocating NADH-quinone reductase subunit F (Chlamydia caviae (strain ATCC VR-813 / DSM 19441 / 03DC25 / GPIC) (Chlamydophila caviae)).